We begin with the raw amino-acid sequence, 695 residues long: RING finger protein 145 (695 aa).

Helical transmembrane passes span 53-73 (YLAL…LTLP), 77-97 (LAKL…HQIS), 123-143 (FITA…VMKT), 146-166 (IWLF…IPIE), 168-188 (IVVI…YFLA), 225-245 (LVVP…QIYT), 275-295 (YSLL…LTLC), 316-336 (TEGV…LQVV), 340-360 (FLLS…MLEI), 384-404 (SLCL…CQFF), 410-430 (LLII…TLFV), 460-480 (LLEF…TVFG), and 482-502 (WTVM…WLRA). The RING-type; atypical zinc finger occupies 537–575 (CSICYQDMNSAVITPCSHFFHPGCLKKWLYVQETCPLCH). Residues 589–604 (SGSSTNPVVEQSANNP) are compositionally biased toward polar residues. The tract at residues 589–608 (SGSSTNPVVEQSANNPPQEP) is disordered.

The protein localises to the membrane. The chain is RING finger protein 145 (rnf145) from Xenopus laevis (African clawed frog).